The chain runs to 275 residues: Large ribosomal subunit protein uL2 (275 aa).

The segment at 220-275 (QTRGAAMNPVDHPHGGGEGKTGSSGHPVSPWGMPAKGFKTRKKKASDKLIISRRKK) is disordered. Basic residues predominate over residues 257–275 (FKTRKKKASDKLIISRRKK).

Belongs to the universal ribosomal protein uL2 family. Part of the 50S ribosomal subunit. Forms a bridge to the 30S subunit in the 70S ribosome.

One of the primary rRNA binding proteins. Required for association of the 30S and 50S subunits to form the 70S ribosome, for tRNA binding and peptide bond formation. It has been suggested to have peptidyltransferase activity; this is somewhat controversial. Makes several contacts with the 16S rRNA in the 70S ribosome. This chain is Large ribosomal subunit protein uL2, found in Wolinella succinogenes (strain ATCC 29543 / DSM 1740 / CCUG 13145 / JCM 31913 / LMG 7466 / NCTC 11488 / FDC 602W) (Vibrio succinogenes).